The following is a 361-amino-acid chain: NAD(P)H-quinone oxidoreductase subunit 1, chloroplastic (361 aa).

7 helical membrane-spanning segments follow: residues 28-48 (IWVLIPILTLVLGITLGVLVI), 99-119 (FTIGPSIAVISILLSYSVIPF), 128-148 (LSIGVFLWIAVSSLAPIGLLM), 249-269 (YSGIKFGLFYVASYLNLLVSS), 270-290 (LFVTVLYLGGWNLSIPYLFVP), 301-321 (TIICIFITLAKTYLFLFISIA), and 341-361 (FLLPISLGNLLLTTSFQLLSL).

The protein belongs to the complex I subunit 1 family. NDH is composed of at least 16 different subunits, 5 of which are encoded in the nucleus.

It is found in the plastid. The protein localises to the chloroplast thylakoid membrane. The enzyme catalyses a plastoquinone + NADH + (n+1) H(+)(in) = a plastoquinol + NAD(+) + n H(+)(out). It catalyses the reaction a plastoquinone + NADPH + (n+1) H(+)(in) = a plastoquinol + NADP(+) + n H(+)(out). In terms of biological role, NDH shuttles electrons from NAD(P)H:plastoquinone, via FMN and iron-sulfur (Fe-S) centers, to quinones in the photosynthetic chain and possibly in a chloroplast respiratory chain. The immediate electron acceptor for the enzyme in this species is believed to be plastoquinone. Couples the redox reaction to proton translocation, and thus conserves the redox energy in a proton gradient. In Jasminum nudiflorum (Winter jasmine), this protein is NAD(P)H-quinone oxidoreductase subunit 1, chloroplastic.